The chain runs to 505 residues: MEESRAYLELHRSRHQDTLYPLFFRESIYGLACGHGSIFVENVGYNNKFSLLIVKRLITRMYQQTHFIIFTNDSNKNPFMGYNNHFYSQIILEGFVVVVEILFSLQFCISSLREFEIVKSYNNLRSIHSIFPFFEDKLIYLNHESDIRIPYPIHLEILVQILRYWIKDVSFFHLLRFFFSYYYNWNSIFTPKKWISTFFSKSNPRFFLFLYNLYVWEYESIFLFLRNKSSKLRLKYFRVFFERIFFYEKIEHLVEVSVKDCSYTLSFFKDTFMHYVRYQGKSILVSKNTPLLINKWKYYFIYLWQCHFDIWSRPGTIHINQLSQHSFHFLGYFLSIRPNLSVVRNQMLQNSFLIKMVMKRLDTIVPIIPLIRSLAKAKFCNVFGHPISKPVWANLSDFDIIDRFLRICRNFSHYYNGSAKKKSLYQIRYILRLSCIKTLARKHKSTARTFLKRLGSEKLLEEFFTEEEETFSLIFPRTSFTLKRLYIGRIWYLDILVRNDFVNHF.

This sequence belongs to the intron maturase 2 family. MatK subfamily.

It localises to the plastid. The protein localises to the chloroplast. Usually encoded in the trnK tRNA gene intron. Probably assists in splicing its own and other chloroplast group II introns. The chain is Maturase K from Glycine max (Soybean).